The sequence spans 143 residues: Small ribosomal subunit protein eS19x (143 aa).

Belongs to the eukaryotic ribosomal protein eS19 family.

The chain is Small ribosomal subunit protein eS19x (RPS19C) from Arabidopsis thaliana (Mouse-ear cress).